Reading from the N-terminus, the 81-residue chain is Protein Vpu (81 aa).

At 1 to 6 (MQPIQI) the chain is on the extracellular side. A helical transmembrane segment spans residues 7-27 (AIVALVVAIIIAIVVWSIVII). Over 28–81 (EYRKILRQRKIDRLIDRLIERAEDSGNESEGEISALVEMGVEMGHHAPWDVDDL) the chain is Cytoplasmic. A phosphoserine; by host CK2 mark is found at S52 and S56.

Belongs to the HIV-1 VPU protein family. As to quaternary structure, homopentamer. Interacts with host CD4 and BRTC; these interactions induce proteasomal degradation of CD4. Interacts with host BST2; this interaction leads to the degradation of host BST2. Interacts with host FBXW11. Interacts with host AP1M1; this interaction plays a role in the mistrafficking and subsequent degradation of host BST2. Interacts with host RANBP2; this interaction allows Vpu to down-regulate host BLM sumoylation. Post-translationally, phosphorylated by host CK2. This phosphorylation is necessary for interaction with human BTRC and degradation of CD4.

The protein localises to the host membrane. With respect to regulation, ion channel activity is inhibited by hexamethylene amiloride in vitro. In terms of biological role, enhances virion budding by targeting host CD4 and Tetherin/BST2 to proteasome degradation. Degradation of CD4 prevents any unwanted premature interactions between viral Env and its host receptor CD4 in the endoplasmic reticulum. Degradation of antiretroviral protein Tetherin/BST2 is important for virion budding, as BST2 tethers new viral particles to the host cell membrane. Mechanistically, Vpu bridges either CD4 or BST2 to BTRC, a substrate recognition subunit of the Skp1/Cullin/F-box protein E3 ubiquitin ligase, induces their ubiquitination and subsequent proteasomal degradation. The alteration of the E3 ligase specificity by Vpu seems to promote the degradation of host IKBKB, leading to NF-kappa-B down-regulation and subsequent apoptosis. Acts as a viroporin that forms an oligomeric ion channel in membranes. Modulates the host DNA repair mechanisms to promote degradation of nuclear viral cDNA in cells that are already productively infected in order to suppress immune sensing and proviral hyper-integration (superinfection). Manipulates PML-NBs and modulates SUMOylation of host BLM protein thereby enhancing its DNA-end processing activity toward viral unintegrated linear DNA. Also inhibits RAD52-mediated homologous repair of viral cDNA, preventing the generation of dead-end circular forms of single copies of the long terminal repeat and permitting sustained nucleolytic attack. This is Protein Vpu from Human immunodeficiency virus type 1 group M subtype B (isolate BH10) (HIV-1).